The sequence spans 222 residues: Germin-like protein subfamily 1 member 13 (222 aa).

The N-terminal stretch at 1–18 (MRVSKSLILITLSALVIS) is a signal peptide. The cysteines at positions 32 and 49 are disulfide-linked. The 152-residue stretch at 63-214 (SGLNQAGSTN…AFQLDVNIVE (152 aa)) folds into the Cupin type-1 domain. Asparagine 78 is a glycosylation site (N-linked (GlcNAc...) asparagine). Mn(2+)-binding residues include histidine 111, histidine 113, glutamate 118, and histidine 160.

This sequence belongs to the germin family. In terms of assembly, oligomer (believed to be a pentamer but probably hexamer).

The protein localises to the secreted. It is found in the extracellular space. Its subcellular location is the apoplast. In terms of biological role, may play a role in plant defense. Probably has no oxalate oxidase activity even if the active site is conserved. The protein is Germin-like protein subfamily 1 member 13 (GLP6) of Arabidopsis thaliana (Mouse-ear cress).